Reading from the N-terminus, the 272-residue chain is Proteasome subunit beta type-5 (272 aa).

Residues 1 to 62 (MINIDFDNIE…APKALEFAHG (62 aa)) constitute a propeptide, removed in mature form. Thr-63 (nucleophile) is an active-site residue.

Belongs to the peptidase T1B family. The 26S proteasome consists of a 20S proteasome core and two 19S regulatory subunits. The 20S proteasome core is composed of 28 subunits that are arranged in four stacked rings, resulting in a barrel-shaped structure. The two end rings are each formed by seven alpha subunits, and the two central rings are each formed by seven beta subunits. The catalytic chamber with the active sites is on the inside of the barrel.

The protein resides in the cytoplasm. Its subcellular location is the nucleus. It catalyses the reaction Cleavage of peptide bonds with very broad specificity.. In terms of biological role, the proteasome is a multicatalytic proteinase complex which is characterized by its ability to cleave peptides with Arg, Phe, Tyr, Leu, and Glu adjacent to the leaving group at neutral or slightly basic pH. The proteasome has an ATP-dependent proteolytic activity. The chain is Proteasome subunit beta type-5 (psmB5) from Dictyostelium discoideum (Social amoeba).